We begin with the raw amino-acid sequence, 144 residues long: Large ribosomal subunit protein uL15 (144 aa).

The interval 1-59 is disordered; sequence MRLNTISPAEGSKPTGKRSGRGIGSGLGKTGGVGHKGQKSRSGGRVKPGFEGGQMPIQR. Residues 21–35 show a composition bias toward gly residues; that stretch reads RGIGSGLGKTGGVGH.

It belongs to the universal ribosomal protein uL15 family. In terms of assembly, part of the 50S ribosomal subunit.

Binds to the 23S rRNA. The protein is Large ribosomal subunit protein uL15 of Alteromonas mediterranea (strain DSM 17117 / CIP 110805 / LMG 28347 / Deep ecotype).